The primary structure comprises 28 residues: Toxin a (28 aa).

The LCN-type CS-alpha/beta domain occupies 3–28 (VPGNYPLDSYGNCYPCTILGDNQYCI).

It belongs to the long (3 C-C) scorpion toxin superfamily. Expressed by the venom gland.

The protein resides in the secreted. In terms of biological role, binds to sodium channels (Nav) and affects the channel activation process. This chain is Toxin a, found in Androctonus crassicauda (Arabian fat-tailed scorpion).